Consider the following 1178-residue polypeptide: Pyruvate carboxylase, mitochondrial (1178 aa).

The N-terminal 20 residues, 1-20 (MLKFQTVRGGLRLLGVRRSS), are a transit peptide targeting the mitochondrion. Lys35 and Lys39 each carry N6-acetyllysine. The 451-residue stretch at 36-486 (PIKKVMVANR…DTQFIDENPE (451 aa)) folds into the Biotin carboxylation domain. At Lys79 the chain carries N6-acetyllysine; alternate. An N6-succinyllysine; alternate modification is found at Lys79. An N6-acetyllysine mark is found at Lys148 and Lys152. Residues Lys152 and Glu236 each contribute to the ATP site. Residues 156 to 353 (RAIAIAAGVP…LVHAQIHVSE (198 aa)) form the ATP-grasp domain. Lys241 bears the N6-acetyllysine mark. Residue His271 coordinates ATP. Residues Lys297, Lys316, and Lys319 each carry the N6-acetyllysine modification. The active site involves Arg328. Lys434 carries the post-translational modification N6-acetyllysine. Lys442 bears the N6-succinyllysine mark. A Pyruvate carboxyltransferase domain is found at 563 to 832 (LLLMDTTFRD…DTEVPLERVF (270 aa)). Position 571–575 (571–575 (RDAHQ)) interacts with substrate. Asp572 is a binding site for Mn(2+). The residue at position 589 (Lys589) is an N6-acetyllysine. Residue Arg644 participates in substrate binding. N6-acetyllysine occurs at positions 661 and 717. Mn(2+) is bound at residue Lys741. Lys741 is modified (N6-carboxylysine). Residue Lys748 is modified to N6-acetyllysine. Positions 771 and 773 each coordinate Mn(2+). Lys892 is modified (N6-acetyllysine). Thr908 contacts substrate. N6-acetyllysine is present on Lys969. Residue Lys988 is modified to N6-acetyllysine; alternate. N6-succinyllysine; alternate is present on Lys988. N6-acetyllysine is present on Lys992. Residue Thr1003 is modified to Phosphothreonine. Lys1061, Lys1090, and Lys1124 each carry N6-acetyllysine. The 70-residue stretch at 1109-1178 (KGQIGAPMPG…EGDDLILEIE (70 aa)) folds into the Biotinyl-binding domain. Residue Lys1144 is modified to N6-biotinyllysine.

As to quaternary structure, homotetramer. Interacts (via the biotin carboxylation domain) with SIRT4. The cofactor is biotin. Mn(2+) is required as a cofactor. In terms of processing, acetylation of Lys-748 might play a role in catalytic activity regulation.

It is found in the mitochondrion matrix. It catalyses the reaction hydrogencarbonate + pyruvate + ATP = oxaloacetate + ADP + phosphate + H(+). Its pathway is carbohydrate biosynthesis; gluconeogenesis. Functionally, pyruvate carboxylase catalyzes a 2-step reaction, involving the ATP-dependent carboxylation of the covalently attached biotin in the first step and the transfer of the carboxyl group to pyruvate in the second. Catalyzes in a tissue specific manner, the initial reactions of glucose (liver, kidney) and lipid (adipose tissue, liver, brain) synthesis from pyruvate. In Rattus norvegicus (Rat), this protein is Pyruvate carboxylase, mitochondrial (Pc).